Reading from the N-terminus, the 2444-residue chain is Protein SON (2444 aa).

Ala-2 is subject to N-acetylalanine. An N6-acetyllysine modification is found at Lys-16. Over residues 23–37 (ELSSGRSEGQLNGET) the composition is skewed to polar residues. Residues 23 to 58 (ELSSGRSEGQLNGETNPPIEGNQAGDTAASARSLPN) form a disordered region. Lys-64 is covalently cross-linked (Glycyl lysine isopeptide (Lys-Gly) (interchain with G-Cter in SUMO2)). Positions 79-88 (YKPDLKEASR) are enriched in basic and acidic residues. The disordered stretch occupies residues 79–155 (YKPDLKEASR…GNLESDSFLK (77 aa)). Ser-94 bears the Phosphoserine mark. Residues 106-130 (KKSKKHKKHKNKKKKKKKEKEKKYK) are compositionally biased toward basic residues. Basic and acidic residues predominate over residues 131 to 155 (RQPEESESKLKSHHDGNLESDSFLK). Phosphoserine occurs at positions 142, 150, 152, and 158. Lys-284 bears the N6-acetyllysine mark. 2 disordered regions span residues 301–358 (TLTI…ESLE) and 391–468 (GPPV…PEPP). Pro residues-rich tracts occupy residues 393-406 (PVTP…PSAT) and 420-439 (PELP…PSVT). At Thr-395 the chain carries Phosphothreonine. The interval 721-850 (LASNTMDSQM…LATSSMDSQM (130 aa)) is 13 X 10 AA tandem repeats of L-A-[ST]-[NSG]-[TS]-MDSQM. The tract at residues 907–983 (DPYRLAQDPY…IAPRPYRLAP (77 aa)) is 11 X 7 AA tandem repeats of [DR]-P-Y-R-[LI][AG][QHP]. Arg-945 is subject to Omega-N-methylarginine. Thr-954 carries the post-translational modification Phosphothreonine. Phosphoserine is present on Ser-993. Tandem repeats lie at residues 1001 to 1006 (ERSMMS), 1009 to 1014 (ERSMMS), 1016 to 1021 (ERSMMS), 1025 to 1030 (ERSMMS), 1033 to 1038 (ERSMMS), 1041 to 1046 (ERSMMS), 1050 to 1055 (ERSMMS), 1058 to 1063 (ERSMMS), 1066 to 1071 (ERSMMS), 1075 to 1080 (DRSMMS), 1084 to 1089 (DRSMMS), 1095 to 1100 (DRSMMS), 1106 to 1111 (DRSMMS), and 1115 to 1120 (DRSMMS). A 14 X 6 AA repeats of [ED]-R-S-M-M-S region spans residues 1001-1120 (ERSMMSSYER…SSYTDRSMMS (120 aa)). An Asymmetric dimethylarginine modification is found at Arg-1002. Arg-1017 bears the Asymmetric dimethylarginine mark. Residues Ser-1030 and Ser-1038 each carry the phosphoserine modification. Phosphoserine occurs at positions 1055 and 1063. Phosphoserine is present on Ser-1077. Residues 1141–1168 (PPLPPEEPPTMPPLPPEEPPMTPPLPPE) show a composition bias toward pro residues. Positions 1141 to 1173 (PPLPPEEPPTMPPLPPEEPPMTPPLPPEEPPEG) are 3 X 11 AA tandem repats of P-P-L-P-P-E-E-P-P-[TME]-[MTG]. The disordered stretch occupies residues 1141–1213 (PPLPPEEPPT…PEPPVSQSEI (73 aa)). Residues 1177-1213 (STEQSALTADNTWSTEVTLSTGESLSQPEPPVSQSEI) are compositionally biased toward polar residues. Residues Ser-1678, Ser-1723, Ser-1727, Ser-1772, Ser-1784, Ser-1791, Ser-1794, Ser-1807, and Ser-1808 each carry the phosphoserine modification. The interval 1802 to 2072 (ERASESSSEE…RSPKRLTDLD (271 aa)) is disordered. Composition is skewed to basic and acidic residues over residues 1815-1826 (YEIFVKVKDTHE), 1834-1847 (RDKG…DSSL), and 1855-1870 (KSSE…ESRS). 2 stretches are compositionally biased toward basic residues: residues 1871–1934 (RARK…RKRS) and 1942–1973 (AARA…RRRS). 7 tandem repeats follow at residues 1950–1956 (PSRRSRS), 1959–1977 (PSRR…FSIS), 1978–1984 (PSRRSRT), 1985–1991 (PSRRSRT), 1992–1998 (PSRRSRT), 1999–2005 (PSRRSRT), and 2006–2012 (PSRRSRT). The interval 1950-2019 (PSRRSRSHTP…SRTPSRRRRS (70 aa)) is 7 X 7 AA repeats of P-S-R-R-S-R-[TS]. Positions 1959-2030 (PSRRRRSRSV…SAVRRRSFSI (72 aa)) are 2 X 19 AA repeats of P-S-R-R-R-R-S-R-S-V-V-R-R-R-S-F-S-I-S. A phosphoserine mark is found at Ser-1973, Ser-1975, and Ser-1977. The span at 1980–2027 (RRSRTPSRRSRTPSRRSRTPSRRSRTPSRRSRTPSRRRRSRSAVRRRS) shows a compositional bias: basic residues. One copy of the 2-7; approximate repeat lies at 2013–2019 (PSRRRRS). The stretch at 2020-2030 (RSAVRRRSFSI) is one 3-2; approximate repeat. A phosphoserine mark is found at Ser-2027, Ser-2029, Ser-2031, Ser-2047, and Ser-2049. The segment at 2031–2057 (SPVRLRRSRTPLRRRFSRSPIRRKRSR) is 3 X tandem repeats of [ST]-P-[VLI]-R-[RL]-[RK]-[RF]-S-R. The segment covering 2034–2056 (RLRRSRTPLRRRFSRSPIRRKRS) has biased composition (basic residues). The segment covering 2057–2072 (RSSERGRSPKRLTDLD) has biased composition (basic and acidic residues). N6-acetyllysine; alternate is present on Lys-2073. A Glycyl lysine isopeptide (Lys-Gly) (interchain with G-Cter in SUMO2); alternate cross-link involves residue Lys-2073. Lys-2110 participates in a covalent cross-link: Glycyl lysine isopeptide (Lys-Gly) (interchain with G-Cter in SUMO2). Ser-2147 carries the phosphoserine modification. Lys-2167 is covalently cross-linked (Glycyl lysine isopeptide (Lys-Gly) (interchain with G-Cter in SUMO2)). Residue Thr-2181 is modified to Phosphothreonine. Residues 2192–2238 (EFPVSSGSQHRKKEADSVYGEWVPVEKNGEESKDDDNVFSSSLPSEP) are disordered. Residue Ser-2256 is modified to Phosphoserine. Residues 2323–2369 (TGGMGAVLMRKMGWREGEGLGKNKEGNKEPILVDFKTDRKGLVAVGE) enclose the G-patch domain. A DRBM domain is found at 2389–2444 (HPVSALMEICNKRRWQPPEFLLVHDSGPDHRKHFLFRVLRNGSPYQPNCMFFLNRY).

Interacts with SRSF2. Associates with the spliceosome. Interacts with USH1G. Widely expressed. Highly expressed in brain, heart, spleen, liver, skeletal muscle, kidney and testis.

The protein resides in the nucleus speckle. In terms of biological role, RNA-binding protein that acts as a mRNA splicing cofactor by promoting efficient splicing of transcripts that possess weak splice sites. Specifically promotes splicing of many cell-cycle and DNA-repair transcripts that possess weak splice sites, such as TUBG1, KATNB1, TUBGCP2, AURKB, PCNT, AKT1, RAD23A, and FANCG. Probably acts by facilitating the interaction between Serine/arginine-rich proteins such as SRSF2 and the RNA polymerase II. Also binds to DNA; binds to the consensus DNA sequence: 5'-GA[GT]AN[CG][AG]CC-3'. Essential for correct RNA splicing of multiple genes critical for brain development, neuronal migration and metabolism, including TUBG1, FLNA, PNKP, WDR62, PSMD3, PCK2, PFKL, IDH2, and ACY1. May also regulate the ghrelin signaling in hypothalamic neuron by acting as a negative regulator of GHSR expression. The protein is Protein SON (Son) of Mus musculus (Mouse).